The chain runs to 272 residues: Cerberus (272 aa).

The first 19 residues, 1–19 (MSLLLLQLLVLSCLGDTEP), serve as a signal peptide directing secretion. Cystine bridges form between cysteine 168–cysteine 215, cysteine 182–cysteine 229, cysteine 192–cysteine 245, and cysteine 196–cysteine 247. The CTCK domain occupies 168-253 (CRTLPFSQSV…ECNCETQKIE (86 aa)). Asparagine 228 is a glycosylation site (N-linked (GlcNAc...) asparagine).

It belongs to the DAN family.

It is found in the secreted. Functionally, cytokine that acts as a regulator of the activity of Nodal/BMP pathways during the establishment of bilateral asymmetry in the head and trunk of the embryo. The polypeptide is Cerberus (CER1) (Gallus gallus (Chicken)).